A 326-amino-acid polypeptide reads, in one-letter code: HTH-type transcriptional regulator SyrM (326 aa).

The HTH lysR-type domain occupies isoleucine 32–threonine 89. The segment at residues isoleucine 49–serine 68 is a DNA-binding region (H-T-H motif).

It belongs to the LysR transcriptional regulatory family.

Its function is as follows. Acts in trans to stimulate nod gene expression via nodD3 and exo gene expression via SyrA. The protein is HTH-type transcriptional regulator SyrM (syrM) of Rhizobium meliloti (strain 1021) (Ensifer meliloti).